The following is a 119-amino-acid chain: NADH-quinone oxidoreductase subunit A (119 aa).

Transmembrane regions (helical) follow at residues 9–29 (VLLFILVGIGVGVVPLVLGYV), 63–83 (LVAILFILFDLEIAFLFPWAV), and 88–108 (VGMTGFVAVIVFLAILVVGFA).

The protein belongs to the complex I subunit 3 family. As to quaternary structure, NDH-1 is composed of 14 different subunits. Subunits NuoA, H, J, K, L, M, N constitute the membrane sector of the complex.

It localises to the cell inner membrane. It catalyses the reaction a quinone + NADH + 5 H(+)(in) = a quinol + NAD(+) + 4 H(+)(out). NDH-1 shuttles electrons from NADH, via FMN and iron-sulfur (Fe-S) centers, to quinones in the respiratory chain. The immediate electron acceptor for the enzyme in this species is believed to be ubiquinone. Couples the redox reaction to proton translocation (for every two electrons transferred, four hydrogen ions are translocated across the cytoplasmic membrane), and thus conserves the redox energy in a proton gradient. In Paracidovorax citrulli (strain AAC00-1) (Acidovorax citrulli), this protein is NADH-quinone oxidoreductase subunit A.